A 412-amino-acid polypeptide reads, in one-letter code: Putative competence-damage inducible protein (412 aa).

It belongs to the CinA family.

This Clostridium perfringens (strain 13 / Type A) protein is Putative competence-damage inducible protein.